The following is a 156-amino-acid chain: 1-methylthio-D-xylulose 5-phosphate methylsulfurylase (156 aa).

The region spanning 55-122 (YFEVGPGGHS…ADEALGFLCM (68 aa)) is the Cupin type-2 domain. Positions 67, 69, 73, and 107 each coordinate Mn(2+). Cysteine 121 is an active-site residue.

It carries out the reaction S-methyl-1-thio-D-xylulose 5-phosphate + glutathione = S-(methylsulfanyl)glutathione + 1-deoxy-D-xylulose 5-phosphate. The catalysed reaction is S-(methylsulfanyl)glutathione + AH2 = methanethiol + glutathione + A. It participates in amino-acid biosynthesis; L-methionine biosynthesis via salvage pathway. The protein operates within metabolic intermediate biosynthesis; 1-deoxy-D-xylulose 5-phosphate biosynthesis. In terms of biological role, catalyzes the formation of S-(methylsulfanyl)glutathione and 1-deoxy-D-xylulose 5-phosphate (DXP) from 1-methylthioxylulose 5-phosphate (MTXu-5P). The S-(methylsulfanyl)glutathione is reductively cleaved to relase methanethiol in a second reaction. Involved in the MTA-isoprenoid shunt of the methionine salvage pathway. This is 1-methylthio-D-xylulose 5-phosphate methylsulfurylase from Rhodospirillum rubrum (strain ATCC 11170 / ATH 1.1.1 / DSM 467 / LMG 4362 / NCIMB 8255 / S1).